The following is a 72-amino-acid chain: Gas vesicle protein A (72 aa).

This sequence belongs to the gas vesicle GvpA family. As to quaternary structure, the gas vesicle shell is 2 nm thick and consists of a single layer of this protein. It forms helical ribs nearly perpendicular to the long axis of the vesicle.

Its subcellular location is the gas vesicle shell. Its function is as follows. Gas vesicles are hollow, gas filled proteinaceous nanostructures found in some microorganisms. During planktonic growth they allow positioning of the organism at a favorable depth for light or nutrient acquisition. GvpA forms the protein shell. The polypeptide is Gas vesicle protein A (Synechococcus sp. (strain JA-3-3Ab) (Cyanobacteria bacterium Yellowstone A-Prime)).